A 699-amino-acid polypeptide reads, in one-letter code: Protein STRUBBELIG-RECEPTOR FAMILY 5 (699 aa).

The N-terminal stretch at 1 to 22 (MTQKLVRLVIVSLAITVTLLQA) is a signal peptide. Residues 23-273 (KTDNQEVSAL…DGGGITAGTG (251 aa)) are Extracellular-facing. LRR repeat units lie at residues 93–115 (SLTT…LPPN), 116–136 (IANL…SLSQ), 139–161 (NLQS…FQKL), 163–186 (KLET…ANLT), and 187–209 (SLKK…RNLA). Residue Asn-184 is glycosylated (N-linked (GlcNAc...) asparagine). The tract at residues 239–263 (NDWSTETAPPPPPGVKYGRKSSGSK) is disordered. A helical transmembrane segment spans residues 274–294 (MVIAGACLGVLVLIIVLIALV). Residues 295–699 (SKKKSSLSPH…SYRAHDDYDY (405 aa)) are Cytoplasmic-facing. Ser-368 carries the phosphoserine modification. The Protein kinase domain maps to 404-675 (FSPGNLLGEG…SEVVEALVRM (272 aa)). Residues 410–418 (LGEGSIGRV) and Lys-432 each bind ATP.

It belongs to the protein kinase superfamily. Ser/Thr protein kinase family. In terms of tissue distribution, expressed in leaves and flowers.

The protein resides in the membrane. This is Protein STRUBBELIG-RECEPTOR FAMILY 5 (SRF5) from Arabidopsis thaliana (Mouse-ear cress).